The sequence spans 787 residues: Serine proteinase stubble (787 aa).

Positions 1 to 22 (MKQPTLIRPRLRHRRSTPAAAT) are disordered. The Cytoplasmic portion of the chain corresponds to 1 to 58 (MKQPTLIRPRLRHRRSTPAAATKMCPKRHWLVNNRAAGSRGSGGAAARSRRSLDQIVE). A helical; Signal-anchor for type II membrane protein transmembrane segment spans residues 59-80 (VLVALIVVNCLATAAAALITPP). At 81–787 (DSLESLGSLG…FTPWILEHVR (707 aa)) the chain is on the extracellular side. N-linked (GlcNAc...) asparagine glycosylation occurs at asparagine 177. The segment at 225–516 (AGTLVIRPSG…EISDSSIPDA (292 aa)) is disordered. Low complexity-rich tracts occupy residues 262-280 (SASH…NPNS), 287-303 (QQQQ…NHWQ), 358-368 (PSTSTSTTSTS), 393-438 (SLAA…RTTT), and 449-485 (TTAT…VTSS). Residues 502–512 (GIETNEISDSS) show a composition bias toward polar residues. Disulfide bonds link cysteine 532–cysteine 660 and cysteine 575–cysteine 591. The 244-residue stretch at 544–787 (IVGGKSAAFG…FTPWILEHVR (244 aa)) folds into the Peptidase S1 domain. Residues histidine 590 and aspartate 640 each act as charge relay system in the active site. N-linked (GlcNAc...) asparagine glycosylation occurs at asparagine 672. 2 disulfide bridges follow: cysteine 704–cysteine 723 and cysteine 734–cysteine 763. Serine 738 (charge relay system) is an active-site residue.

The protein belongs to the peptidase S1 family. May activate itself by proteolytic cleavage.

The protein localises to the membrane. Functionally, hormone dependent protease required for epithelial morphogenesis, including the formation of bristles, legs, and wings. Has a dual function, detaches imaginal disk cells from extracellular matrices through its extracellular proteolytic domain and transmits an outside-to-inside signal to its intracellular domain to modify the cytoskeleton during morphogenesis. This chain is Serine proteinase stubble (Sb), found in Drosophila melanogaster (Fruit fly).